Consider the following 218-residue polypeptide: Small ribosomal subunit protein uS3c (218 aa).

The region spanning 39-118 (IRNFIKNYVQ…KLNIAITRIA (80 aa)) is the KH type-2 domain.

Belongs to the universal ribosomal protein uS3 family. As to quaternary structure, part of the 30S ribosomal subunit.

The protein localises to the plastid. Its subcellular location is the chloroplast. The protein is Small ribosomal subunit protein uS3c (rps3) of Ipomoea purpurea (Common morning glory).